A 314-amino-acid polypeptide reads, in one-letter code: uncharacterized protein (314 aa).

2 helical membrane-spanning segments follow: residues 23–43 (LALGPVHPGGPTLIDLLMALF) and 98–118 (MASGIGGALSGALGGVMGPLT). Residues 165 to 184 (GLGSGAGGGDVGGGGAGGTT) show a composition bias toward gly residues. A disordered region spans residues 165-314 (GLGSGAGGGD…APDEKTDAGE (150 aa)). Positions 190–202 (GPPPVPTSSPPTT) are enriched in pro residues. Composition is skewed to low complexity over residues 203-212 (PAGAPTKSAT) and 219-232 (ASPASAHMGAAGMP). A helical transmembrane segment spans residues 221–241 (PASAHMGAAGMPMVPPGAMGA). The segment covering 294 to 314 (LLPEHKDFGRIAPDEKTDAGE) has biased composition (basic and acidic residues).

It localises to the cell membrane. This is an uncharacterized protein from Mycobacterium tuberculosis (strain CDC 1551 / Oshkosh).